Here is a 213-residue protein sequence, read N- to C-terminus: mRNA-decapping protein OPG121 (213 aa).

Glu-16 and Arg-50 together coordinate N(7)-methyl-GTP. The Nudix hydrolase domain maps to 30-209 (KDTHVFAACI…EYLSYIYNML (180 aa)). The Nudix box signature appears at 111–132 (GKLDKKESIKDCLRRELKEESD). The Mg(2+) site is built by Glu-117, Glu-126, Glu-130, Asp-151, and Glu-183. The Nucleophile role is filled by Glu-126. Asp-151 is a binding site for N(7)-methyl-GTP.

Belongs to the Nudix hydrolase family. It depends on Mg(2+) as a cofactor. Requires Mn(2+) as cofactor.

The enzyme catalyses a 5'-end (N(7)-methyl 5'-triphosphoguanosine)-guanosine in mRNA + H2O = a 5'-end phospho-guanosine in mRNA + N(7)-methyl-GDP + 2 H(+). In terms of biological role, decapping enzyme that remove the protective 5'-cap from both host and viral mRNAs to commit transcripts for decay by the cellular exonuclease XRN1. Accelerates viral and cellular mRNA turnover to eliminate competing host mRNAs and allow stage-specific synthesis of viral proteins. Acceleration of the turnover of cellular transcripts may even promote the shutoff of host protein synthesis. This chain is mRNA-decapping protein OPG121 (OPG121), found in Homo sapiens (Human).